A 191-amino-acid polypeptide reads, in one-letter code: MLLPRQFYARDVLIVAKDLLNCYLVREYNGHLLIGKIVETEAYHQNDPACHAYRGKTKRNEVMFGPPGHAYVYFTYGMHYCFNVVTGAIGRAEAVLIRALEPVKGIDIIKTLRGGKSERELLSGPAKLTQGLAIDLKLNGHDLTGGKILYITKGEPVAEEDIVVTTRIGINAGKDLPYRFYLKNNKYVSKK.

It belongs to the DNA glycosylase MPG family.

The protein is Putative 3-methyladenine DNA glycosylase of Carboxydothermus hydrogenoformans (strain ATCC BAA-161 / DSM 6008 / Z-2901).